Consider the following 89-residue polypeptide: uncharacterized protein (89 aa).

Positions 66 to 89 (RIKEQSSSSSATRTTQEPSLHLPD) are disordered.

This is an uncharacterized protein from Cestrum parqui (CmYLCV).